Here is a 501-residue protein sequence, read N- to C-terminus: uncharacterized protein (501 aa).

2 disordered regions span residues 179–404 (EKTS…DETA) and 480–501 (SDDT…DDSD). A compositionally biased stretch (basic and acidic residues) spans 191-200 (SRNESQDKSR). The segment covering 201–214 (DKSRKKVCNTHKNK) has biased composition (basic residues). Positions 215–226 (KTLDNVKPDKNI) are enriched in basic and acidic residues. A compositionally biased stretch (low complexity) spans 231–274 (SSNKFTTNKPKSNKNSSDSDGSTKTTKSTRSTKSTKSSKSQKST). Over residues 304-316 (NPKESINHKKNDS) the composition is skewed to basic and acidic residues. Over residues 333 to 352 (DSTNCRKSNRTTTRDVTNSD) the composition is skewed to polar residues. Residues 379-403 (EQSDLTEDETEENVSEEDETEEDET) show a composition bias toward acidic residues.

This is an uncharacterized protein from Acanthamoeba polyphaga mimivirus (APMV).